Reading from the N-terminus, the 321-residue chain is ATP phosphoribosyltransferase regulatory subunit (321 aa).

Belongs to the class-II aminoacyl-tRNA synthetase family. HisZ subfamily. In terms of assembly, heteromultimer composed of HisG and HisZ subunits.

The protein localises to the cytoplasm. It functions in the pathway amino-acid biosynthesis; L-histidine biosynthesis; L-histidine from 5-phospho-alpha-D-ribose 1-diphosphate: step 1/9. Required for the first step of histidine biosynthesis. May allow the feedback regulation of ATP phosphoribosyltransferase activity by histidine. The polypeptide is ATP phosphoribosyltransferase regulatory subunit (Thiobacillus denitrificans (strain ATCC 25259 / T1)).